A 273-amino-acid polypeptide reads, in one-letter code: NAD-dependent protein deacylase (273 aa).

Residues 20–272 (RERLRQRIFF…PEFVDKFLKG (253 aa)) enclose the Deacetylase sirtuin-type domain. 48–67 (GAGISAESGIRTFRAADGLW) lines the NAD(+) pocket. Substrate contacts are provided by Tyr-92 and Arg-95. 129 to 132 (QNID) contacts NAD(+). Residue His-147 is the Proton acceptor of the active site. 2 residues coordinate Zn(2+): Cys-155 and Cys-174. NAD(+)-binding positions include 214 to 216 (GTS), 240 to 242 (NLE), and Ala-258.

It belongs to the sirtuin family. Class III subfamily. Zn(2+) serves as cofactor.

The protein resides in the cytoplasm. The catalysed reaction is N(6)-acetyl-L-lysyl-[protein] + NAD(+) + H2O = 2''-O-acetyl-ADP-D-ribose + nicotinamide + L-lysyl-[protein]. The enzyme catalyses N(6)-succinyl-L-lysyl-[protein] + NAD(+) + H2O = 2''-O-succinyl-ADP-D-ribose + nicotinamide + L-lysyl-[protein]. It carries out the reaction N(6)-(2-hydroxyisobutanoyl)-L-lysyl-[protein] + NAD(+) + H2O = 2''-O-(2-hydroxyisobutanoyl)-ADP-D-ribose + nicotinamide + L-lysyl-[protein]. Functionally, NAD-dependent lysine deacetylase that specifically removes acetyl groups on target proteins. Also acts as a protein-lysine deacylase by mediating protein desuccinylation and de-2-hydroxyisobutyrylation. Modulates the activities of several proteins which are inactive in their acylated form. This is NAD-dependent protein deacylase from Salmonella typhi.